A 370-amino-acid chain; its full sequence is MVGKLKQNLLLACLVISSVTVFYLGQHAMECHHRIEERSQPARLENPKATVRAGLDIKANKTFTYHKDMPLIFIGGVPRSGTTLMRAMLDAHPDIRCGEETRVIPRILALKQMWSRSSKEKIRLDEAGVTDEVLDSAMQAFLLEVIVKHGEPAPYLCNKDPFALKSLTYLARLFPNAKFLLMVRDGRASVHSMISRKVTIAGFDLNSYRDCLTKWNRAIETMYNQCMEVGYKKCMLVHYEQLVLHPERWMRTLLKFLHIPWNHSVLHHEEMIGKAGGVSLSKVERSTDQVIKPVNVGALSKWVGKIPPDVLQDMAVIAPMLAKLGYDPYANPPNYGKPDPKILENTRRVYKGEFQLPDFLKEKPQTEQVE.

Over 1-8 the chain is Cytoplasmic; that stretch reads MVGKLKQN. Residues 9-25 form a helical; Signal-anchor for type II membrane protein membrane-spanning segment; that stretch reads LLLACLVISSVTVFYLG. Residues 26–370 are Lumenal-facing; the sequence is QHAMECHHRI…KEKPQTEQVE (345 aa). A glycan (N-linked (GlcNAc...) asparagine) is linked at Asn-60. Residue 79 to 83 coordinates 3'-phosphoadenylyl sulfate; the sequence is RSGTT. Cys-97 and Cys-157 are disulfide-bonded. Glu-100 functions as the Proton donor/acceptor in the catalytic mechanism. The interaction with peptide substrate stretch occupies residues 102–106; it reads RVIPR. 3'-phosphoadenylyl sulfate-binding residues include Arg-184, Ser-192, and Arg-196. A disulfide bond links Cys-226 and Cys-234. Tyr-239 is a binding site for 3'-phosphoadenylyl sulfate. Asn-262 is a glycosylation site (N-linked (GlcNAc...) asparagine). Residues 286-295 and Lys-301 contribute to the 3'-phosphoadenylyl sulfate site; that span reads STDQVIKPVN.

This sequence belongs to the protein sulfotransferase family. Homodimer. Can also form heterodimers with TPST2. Post-translationally, N-glycosylated. In terms of tissue distribution, ubiquitous. Detected in heart, brain, lung, liver, spleen, kidney, skeletal muscle and testis.

Its subcellular location is the golgi apparatus membrane. The enzyme catalyses L-tyrosyl-[protein] + 3'-phosphoadenylyl sulfate = O-sulfo-L-tyrosine-[protein] + adenosine 3',5'-bisphosphate + H(+). Catalyzes the O-sulfation of tyrosine residues within acidic motifs of polypeptides, using 3'-phosphoadenylyl sulfate (PAPS) as cosubstrate. The chain is Protein-tyrosine sulfotransferase 1 (Tpst1) from Mus musculus (Mouse).